A 378-amino-acid polypeptide reads, in one-letter code: UPF0754 membrane protein Exig_0680 (378 aa).

2 consecutive transmembrane segments (helical) span residues 5–25 (VDLV…GAVT) and 357–377 (ITWL…ILLI).

It belongs to the UPF0754 family.

Its subcellular location is the cell membrane. In Exiguobacterium sibiricum (strain DSM 17290 / CCUG 55495 / CIP 109462 / JCM 13490 / 255-15), this protein is UPF0754 membrane protein Exig_0680.